Consider the following 235-residue polypeptide: Fibrillarin-like rRNA/tRNA 2'-O-methyltransferase (235 aa).

S-adenosyl-L-methionine-binding positions include 91–92, 110–111, 137–138, and 157–160; these read TT, EF, DA, and DVAQ.

The protein belongs to the methyltransferase superfamily. Fibrillarin family. As to quaternary structure, interacts with nop5. Component of box C/D small ribonucleoprotein (sRNP) particles that contain rpl7ae, FlpA and nop5, plus a guide RNA.

Involved in pre-rRNA and tRNA processing. Utilizes the methyl donor S-adenosyl-L-methionine to catalyze the site-specific 2'-hydroxyl methylation of ribose moieties in rRNA and tRNA. Site specificity is provided by a guide RNA that base pairs with the substrate. Methylation occurs at a characteristic distance from the sequence involved in base pairing with the guide RNA. The protein is Fibrillarin-like rRNA/tRNA 2'-O-methyltransferase of Pyrobaculum islandicum (strain DSM 4184 / JCM 9189 / GEO3).